The primary structure comprises 416 residues: Pre-mRNA-splicing factor slu-7 (416 aa).

The segment at 1 to 34 (MPPPPPNRREQATAAPSSTDKSETGAGAARKEDN) is disordered. The CCHC-type zinc-finger motif lies at 95-112 (GACENCGAMGHKKKDCLE). Basic and acidic residues-rich tracts occupy residues 168-179 (RRALQGDQKTPD) and 188-213 (DDKSGFKYDEESDMGRDRATTKQSMR). Positions 168-213 (RRALQGDQKTPDGEGADGPEDDKSGFKYDEESDMGRDRATTKQSMR) are disordered.

It belongs to the SLU7 family. In terms of assembly, associated with the spliceosome.

It localises to the nucleus. Its function is as follows. Involved in pre-mRNA splicing. The polypeptide is Pre-mRNA-splicing factor slu-7 (slu-7) (Neurospora crassa (strain ATCC 24698 / 74-OR23-1A / CBS 708.71 / DSM 1257 / FGSC 987)).